A 76-amino-acid chain; its full sequence is Protein OPG128 (76 aa).

A disulfide bond links C17 and C21.

The protein belongs to the orthopoxvirus OPG128 family. In terms of assembly, interacts with sulfhydryl oxidase OPG072; this interaction involves formation of a transient disulfide-bonded intermediate, allowing disulfide bond transfer. Interacts with OPG088; this interaction involves formation of a transient disulfide-bonded intermediate, allowing disulfide bond transfer.

Its function is as follows. Late protein which probably participates in disulfide bond formation by functioning as a thiol-disulfide transfer protein between membrane-associated OPG072 and OPG08. The complete pathway for formation of disulfide bonds in intracellular virion membrane proteins sequentially involves oxidation of OPG072, OPG128 and OPG08. This Homo sapiens (Human) protein is Protein OPG128 (OPG128).